The primary structure comprises 58 residues: UPF0339 protein TDE_0826 (58 aa).

Belongs to the UPF0339 family.

In Treponema denticola (strain ATCC 35405 / DSM 14222 / CIP 103919 / JCM 8153 / KCTC 15104), this protein is UPF0339 protein TDE_0826.